We begin with the raw amino-acid sequence, 547 residues long: Chaperonin GroEL (547 aa).

ATP is bound by residues 30 to 33 (TLGP), K51, 87 to 91 (DGTTT), G415, and D496.

It belongs to the chaperonin (HSP60) family. Forms a cylinder of 14 subunits composed of two heptameric rings stacked back-to-back. Interacts with the co-chaperonin GroES.

It localises to the cytoplasm. The enzyme catalyses ATP + H2O + a folded polypeptide = ADP + phosphate + an unfolded polypeptide.. In terms of biological role, together with its co-chaperonin GroES, plays an essential role in assisting protein folding. The GroEL-GroES system forms a nano-cage that allows encapsulation of the non-native substrate proteins and provides a physical environment optimized to promote and accelerate protein folding. The polypeptide is Chaperonin GroEL (Chlorobium limicola (strain DSM 245 / NBRC 103803 / 6330)).